A 492-amino-acid polypeptide reads, in one-letter code: DEAD-box ATP-dependent RNA helicase RhpA (492 aa).

The Q motif motif lies at 20-48 (PSFNDLGLKESVLKSVYEAGFTSPSPIQE). Residues 51-220 (IPAVLQGRDV…DKILENPIKI (170 aa)) form the Helicase ATP-binding domain. An ATP-binding site is contributed by 64-71 (AQTGTGKT). The DEAD box motif lies at 168 to 171 (DESD). The Helicase C-terminal domain occupies 231–393 (DITQRFYVIN…EIPTINENQI (163 aa)). The disordered stretch occupies residues 445–492 (AIQNPKEKTPKPSHKKTPQHERARSFKKGQHRDRHPKTNHHSKKPKRR). Basic residues predominate over residues 469-492 (SFKKGQHRDRHPKTNHHSKKPKRR).

Belongs to the DEAD box helicase family. In terms of assembly, homodimer. Interacts with RNase J (rnj), might be a member of a minimal RNA degradosome complex.

The protein localises to the cytoplasm. The catalysed reaction is ATP + H2O = ADP + phosphate + H(+). Its function is as follows. DEAD-box RNA helicase probably involved in RNA degradation. Unwinds dsRNA in both 5'- and 3'-directions. Background RNA-dependent ATPase activity is stimulated about 5-fold by RNaseJ (rnj). Stimulates the dsRNase activity of RNase J. This Helicobacter pylori (strain B128) protein is DEAD-box ATP-dependent RNA helicase RhpA (rhpA).